A 210-amino-acid chain; its full sequence is Peptidyl-tRNA hydrolase (210 aa).

Tyr14 contributes to the tRNA binding site. The active-site Proton acceptor is the His19. Phe64, Asn66, and Asn112 together coordinate tRNA.

Belongs to the PTH family. As to quaternary structure, monomer.

The protein resides in the cytoplasm. It carries out the reaction an N-acyl-L-alpha-aminoacyl-tRNA + H2O = an N-acyl-L-amino acid + a tRNA + H(+). Its function is as follows. Hydrolyzes ribosome-free peptidyl-tRNAs (with 1 or more amino acids incorporated), which drop off the ribosome during protein synthesis, or as a result of ribosome stalling. Catalyzes the release of premature peptidyl moieties from peptidyl-tRNA molecules trapped in stalled 50S ribosomal subunits, and thus maintains levels of free tRNAs and 50S ribosomes. The sequence is that of Peptidyl-tRNA hydrolase from Methylorubrum extorquens (strain CM4 / NCIMB 13688) (Methylobacterium extorquens).